Consider the following 158-residue polypeptide: 6,7-dimethyl-8-ribityllumazine synthase (158 aa).

Residues Phe23, 61 to 63, and 85 to 87 contribute to the 5-amino-6-(D-ribitylamino)uracil site; these read SFE and AVI. Residue 90–91 coordinates (2S)-2-hydroxy-3-oxobutyl phosphate; the sequence is ET. The active-site Proton donor is His93. Position 118 (Phe118) interacts with 5-amino-6-(D-ribitylamino)uracil. Position 132 (Arg132) interacts with (2S)-2-hydroxy-3-oxobutyl phosphate.

This sequence belongs to the DMRL synthase family.

The enzyme catalyses (2S)-2-hydroxy-3-oxobutyl phosphate + 5-amino-6-(D-ribitylamino)uracil = 6,7-dimethyl-8-(1-D-ribityl)lumazine + phosphate + 2 H2O + H(+). Its pathway is cofactor biosynthesis; riboflavin biosynthesis; riboflavin from 2-hydroxy-3-oxobutyl phosphate and 5-amino-6-(D-ribitylamino)uracil: step 1/2. In terms of biological role, catalyzes the formation of 6,7-dimethyl-8-ribityllumazine by condensation of 5-amino-6-(D-ribitylamino)uracil with 3,4-dihydroxy-2-butanone 4-phosphate. This is the penultimate step in the biosynthesis of riboflavin. In Prochlorococcus marinus (strain AS9601), this protein is 6,7-dimethyl-8-ribityllumazine synthase.